Here is a 218-residue protein sequence, read N- to C-terminus: Large ribosomal subunit protein bL25 (218 aa).

Residues 187–218 (SATAAVEEAKEDGAPEESAQGQGAAEAQETGK) are disordered. Residues 202–218 (EESAQGQGAAEAQETGK) show a composition bias toward low complexity.

Belongs to the bacterial ribosomal protein bL25 family. CTC subfamily. As to quaternary structure, part of the 50S ribosomal subunit; part of the 5S rRNA/L5/L18/L25 subcomplex. Contacts the 5S rRNA. Binds to the 5S rRNA independently of L5 and L18.

Its function is as follows. This is one of the proteins that binds to the 5S RNA in the ribosome where it forms part of the central protuberance. The polypeptide is Large ribosomal subunit protein bL25 (Anaplasma marginale (strain Florida)).